The primary structure comprises 74 residues: MNKVVVYVLALSILLFFGLPNTTLARVQYGSPVSRKEIGKGVWDQKVFNEIKIAVGGSDSVRAHSKDHKSNPNG.

A signal peptide spans 1 to 25 (MNKVVVYVLALSILLFFGLPNTTLA). An SCOOP motif motif is present at residues 52–66 (KIAVGGSDSVRAHSK). Residues 58-60 (SDS) carry the SxS motif essential for MIK2 binding motif.

The protein belongs to the serine rich endogenous peptide (SCOOP) phytocytokine family. As to quaternary structure, interacts with MIK2 (via extracellular leucine-rich repeat domain); this interaction triggers the formation of complex between MIK2 and the BAK1/SERK3 and SERK4 coreceptors, and subsequent BAK1 activation by phosphorylation. As to expression, mostly expressed in roots, and, to a lower extent, in seedlings shoots.

The protein localises to the cell membrane. It localises to the secreted. The protein resides in the extracellular space. Its subcellular location is the apoplast. Functionally, brassicaceae-specific phytocytokine (plant endogenous peptide released into the apoplast) perceived by MIK2 in a BAK1/SERK3 and SERK4 coreceptors-dependent manner, that modulates various physiological and antimicrobial processes including growth prevention and reactive oxygen species (ROS) response regulation. Inhibits root growth. The chain is Serine rich endogenous peptide 23 from Arabidopsis thaliana (Mouse-ear cress).